The primary structure comprises 291 residues: 33 kDa chaperonin (291 aa).

2 disulfide bridges follow: cysteine 235–cysteine 237 and cysteine 268–cysteine 271.

Belongs to the HSP33 family. Under oxidizing conditions two disulfide bonds are formed involving the reactive cysteines. Under reducing conditions zinc is bound to the reactive cysteines and the protein is inactive.

The protein localises to the cytoplasm. In terms of biological role, redox regulated molecular chaperone. Protects both thermally unfolding and oxidatively damaged proteins from irreversible aggregation. Plays an important role in the bacterial defense system toward oxidative stress. The polypeptide is 33 kDa chaperonin (Bacillus velezensis (strain DSM 23117 / BGSC 10A6 / LMG 26770 / FZB42) (Bacillus amyloliquefaciens subsp. plantarum)).